The following is a 221-amino-acid chain: Cysteine-rich venom protein (221 aa).

Residue Gly-1 is a signal peptide. The SCP domain occupies 21-148 (DLHNSLRRSV…EYKYFYVCQY (128 aa)). Cystine bridges form between Cys-57–Cys-135, Cys-74–Cys-149, Cys-130–Cys-146, Cys-168–Cys-175, Cys-171–Cys-180, Cys-184–Cys-216, Cys-193–Cys-210, and Cys-201–Cys-214. The ShKT domain maps to 184–216 (CTHEDKFTNCKDLVKQGCNNNYLKTNCPASCSC).

The protein belongs to the CRISP family. In terms of tissue distribution, expressed by the venom gland.

The protein resides in the secreted. Functionally, blocks contraction of smooth muscle elicited by high potassium-induced depolarization, but does not block caffeine-stimulated contraction. May target voltage-gated calcium channels in smooth muscle. This is Cysteine-rich venom protein from Vipera nikolskii (Nikolsky's adder).